A 386-amino-acid polypeptide reads, in one-letter code: Tryptophan--tRNA ligase (386 aa).

A 'HIGH' region motif is present at residues 82-90 (PSGPMHIGH). Positions 253 to 257 (KMSAS) match the 'KMSKS' region motif.

Belongs to the class-I aminoacyl-tRNA synthetase family.

It is found in the cytoplasm. The enzyme catalyses tRNA(Trp) + L-tryptophan + ATP = L-tryptophyl-tRNA(Trp) + AMP + diphosphate + H(+). The sequence is that of Tryptophan--tRNA ligase from Pyrococcus horikoshii (strain ATCC 700860 / DSM 12428 / JCM 9974 / NBRC 100139 / OT-3).